The sequence spans 217 residues: tRNA 5-hydroxyuridine methyltransferase (217 aa).

S-adenosyl-L-methionine contacts are provided by residues M38, S68, E85, 113-114 (DA), and D133. Mg(2+) is bound by residues D133, D159, and N160.

Belongs to the class I-like SAM-binding methyltransferase superfamily. Cation-dependent O-methyltransferase family. Homodimer.

The enzyme catalyses 5-hydroxyuridine(34) in tRNA + S-adenosyl-L-methionine = 5-methoxyuridine(34) in tRNA + S-adenosyl-L-homocysteine + H(+). In terms of biological role, catalyzes the methylation of 5-hydroxyuridine (ho5U) to form 5-methoxyuridine (mo5U) at position 34 in tRNAs. The sequence is that of tRNA 5-hydroxyuridine methyltransferase from Bacillus subtilis (strain 168).